Reading from the N-terminus, the 195-residue chain is HTH-type transcriptional regulator BetI (195 aa).

An HTH tetR-type domain is found at S8 to L68. A DNA-binding region (H-T-H motif) is located at residues T31–F50.

The protein operates within amine and polyamine biosynthesis; betaine biosynthesis via choline pathway [regulation]. Its function is as follows. Repressor involved in the biosynthesis of the osmoprotectant glycine betaine. It represses transcription of the choline transporter BetT and the genes of BetAB involved in the synthesis of glycine betaine. In Shigella flexneri serotype 5b (strain 8401), this protein is HTH-type transcriptional regulator BetI.